The chain runs to 369 residues: Flagellar P-ring protein (369 aa).

A signal peptide spans 1–22; sequence MIKLKQLIAATLLLSAAFGAHA.

The protein belongs to the FlgI family. As to quaternary structure, the basal body constitutes a major portion of the flagellar organelle and consists of four rings (L,P,S, and M) mounted on a central rod.

Its subcellular location is the periplasm. The protein localises to the bacterial flagellum basal body. Functionally, assembles around the rod to form the L-ring and probably protects the motor/basal body from shearing forces during rotation. This is Flagellar P-ring protein from Pseudomonas syringae pv. tomato (strain ATCC BAA-871 / DC3000).